The following is a 535-amino-acid chain: Cytochrome c oxidase subunit 1 (535 aa).

A helical transmembrane segment spans residues 21–43 (VLYFIFALFSAMIGTGLSAIIRL). Positions 44 and 49 each coordinate Ca(2+). Transmembrane regions (helical) follow at residues 63 to 85 (VITAHAILMIFFFVMPALVGGFG), 106 to 128 (ISFWLLVPSLILILTSALVEAGA), 153 to 175 (IFSLHLSGFSSLLGAINFITTFI), 188 to 210 (PLFAWAVLFTAILLLLSLPVLAA), 242 to 264 (YWWNHPEVYILIIPGFGIISHAV), and 271 to 293 (PVFGVQGMIYAMWSIGLLGFCVW). Fe(II)-heme a is bound at residue His-67. His-246 is a Cu cation binding site. Residues 246 to 250 (HPEVY) constitute a cross-link (1'-histidyl-3'-tyrosine (His-Tyr)). Tyr-250 provides a ligand contact to O2. 2 residues coordinate Cu cation: His-295 and His-296. The next 2 membrane-spanning stretches (helical) occupy residues 308-330 (AYFTSATMVIAVPTSIKIFSWLA) and 342-364 (TALFALGFIFLFTIGGLTGVVLA). His-373 and Asp-374 together coordinate Mg(2+). 3 consecutive transmembrane segments (helical) span residues 379 to 401 (VAHFHYVLSMGAVFSIFCGWYLW), 414 to 436 (LSHIHFWLMFIGVNVTFFPMHFL), and 456 to 478 (NQVASLGSIISIVASIVFIYVVY). His-381 lines the heme a3 pocket. Residue His-383 participates in Fe(II)-heme a binding.

It belongs to the heme-copper respiratory oxidase family. Component of the cytochrome c oxidase (complex IV, CIV), a multisubunit enzyme composed of a catalytic core of 3 subunits and several supernumerary subunits. The complex exists as a monomer or a dimer and forms supercomplexes (SCs) in the inner mitochondrial membrane with ubiquinol-cytochrome c oxidoreductase (cytochrome b-c1 complex, complex III, CIII). The cofactor is heme. Requires Cu cation as cofactor.

Its subcellular location is the mitochondrion inner membrane. The catalysed reaction is 4 Fe(II)-[cytochrome c] + O2 + 8 H(+)(in) = 4 Fe(III)-[cytochrome c] + 2 H2O + 4 H(+)(out). It participates in energy metabolism; oxidative phosphorylation. Component of the cytochrome c oxidase, the last enzyme in the mitochondrial electron transport chain which drives oxidative phosphorylation. The respiratory chain contains 3 multisubunit complexes succinate dehydrogenase (complex II, CII), ubiquinol-cytochrome c oxidoreductase (cytochrome b-c1 complex, complex III, CIII) and cytochrome c oxidase (complex IV, CIV), that cooperate to transfer electrons derived from NADH and succinate to molecular oxygen, creating an electrochemical gradient over the inner membrane that drives transmembrane transport and the ATP synthase. Cytochrome c oxidase is the component of the respiratory chain that catalyzes the reduction of oxygen to water. Electrons originating from reduced cytochrome c in the intermembrane space (IMS) are transferred via the dinuclear copper A center (CU(A)) of subunit 2 and heme A of subunit 1 to the active site in subunit 1, a binuclear center (BNC) formed by heme A3 and copper B (CU(B)). The BNC reduces molecular oxygen to 2 water molecules using 4 electrons from cytochrome c in the IMS and 4 protons from the mitochondrial matrix. The protein is Cytochrome c oxidase subunit 1 (COX1) of Yarrowia lipolytica (strain CLIB 122 / E 150) (Yeast).